The following is a 367-amino-acid chain: Protein RecA (367 aa).

Residue Gly-73–Thr-80 participates in ATP binding.

It belongs to the RecA family.

The protein localises to the cytoplasm. Its function is as follows. Can catalyze the hydrolysis of ATP in the presence of single-stranded DNA, the ATP-dependent uptake of single-stranded DNA by duplex DNA, and the ATP-dependent hybridization of homologous single-stranded DNAs. It interacts with LexA causing its activation and leading to its autocatalytic cleavage. This is Protein RecA from Delftia acidovorans (strain DSM 14801 / SPH-1).